Here is a 323-residue protein sequence, read N- to C-terminus: Ubiquinone biosynthesis protein COQ4, mitochondrial (323 aa).

Zn(2+)-binding residues include His-205, Asp-206, His-209, and Glu-221.

This sequence belongs to the COQ4 family. In terms of assembly, component of a multi-subunit COQ enzyme complex, composed of at least COQ3, COQ4, COQ5, COQ6, COQ7 and COQ9. Zn(2+) serves as cofactor.

The protein localises to the mitochondrion inner membrane. The enzyme catalyses a 4-hydroxy-3-methoxy-5-(all-trans-polyprenyl)benzoate + H(+) = a 2-methoxy-6-(all-trans-polyprenyl)phenol + CO2. It functions in the pathway cofactor biosynthesis; ubiquinone biosynthesis. Its function is as follows. Lyase that catalyzes the C1-decarboxylation of 4-hydroxy-3-methoxy-5-(all-trans-polyprenyl)benzoic acid into 2-methoxy-6-(all-trans-polyprenyl)phenol during ubiquinone biosynthesis. The protein is Ubiquinone biosynthesis protein COQ4, mitochondrial of Candida albicans (strain SC5314 / ATCC MYA-2876) (Yeast).